The following is a 413-amino-acid chain: Phosphopentomutase (413 aa).

6 residues coordinate Mn(2+): Asp-11, Asp-306, His-311, Asp-347, His-348, and His-359.

It belongs to the phosphopentomutase family. Mn(2+) serves as cofactor.

Its subcellular location is the cytoplasm. It carries out the reaction 2-deoxy-alpha-D-ribose 1-phosphate = 2-deoxy-D-ribose 5-phosphate. The enzyme catalyses alpha-D-ribose 1-phosphate = D-ribose 5-phosphate. The protein operates within carbohydrate degradation; 2-deoxy-D-ribose 1-phosphate degradation; D-glyceraldehyde 3-phosphate and acetaldehyde from 2-deoxy-alpha-D-ribose 1-phosphate: step 1/2. In terms of biological role, isomerase that catalyzes the conversion of deoxy-ribose 1-phosphate (dRib-1-P) and ribose 1-phosphate (Rib-1-P) to deoxy-ribose 5-phosphate (dRib-5-P) and ribose 5-phosphate (Rib-5-P), respectively. In Helicobacter pylori (strain G27), this protein is Phosphopentomutase.